The chain runs to 411 residues: Imidazolonepropionase (411 aa).

Fe(3+)-binding residues include His75 and His77. Zn(2+) contacts are provided by His75 and His77. 3 residues coordinate 4-imidazolone-5-propanoate: Arg84, Tyr147, and His180. An N-formimidoyl-L-glutamate-binding site is contributed by Tyr147. His245 is a binding site for Fe(3+). Position 245 (His245) interacts with Zn(2+). Gln248 serves as a coordination point for 4-imidazolone-5-propanoate. Asp320 is a Fe(3+) binding site. Asp320 contacts Zn(2+). N-formimidoyl-L-glutamate-binding residues include Asn322 and Gly324. Thr325 is a binding site for 4-imidazolone-5-propanoate.

Belongs to the metallo-dependent hydrolases superfamily. HutI family. It depends on Zn(2+) as a cofactor. The cofactor is Fe(3+).

The protein localises to the cytoplasm. The enzyme catalyses 4-imidazolone-5-propanoate + H2O = N-formimidoyl-L-glutamate. Its pathway is amino-acid degradation; L-histidine degradation into L-glutamate; N-formimidoyl-L-glutamate from L-histidine: step 3/3. Functionally, catalyzes the hydrolytic cleavage of the carbon-nitrogen bond in imidazolone-5-propanoate to yield N-formimidoyl-L-glutamate. It is the third step in the universal histidine degradation pathway. This is Imidazolonepropionase from Aeromonas hydrophila subsp. hydrophila (strain ATCC 7966 / DSM 30187 / BCRC 13018 / CCUG 14551 / JCM 1027 / KCTC 2358 / NCIMB 9240 / NCTC 8049).